The primary structure comprises 273 residues: Flagellin FljK (273 aa).

It belongs to the bacterial flagellin family. In terms of assembly, in C.crescentus, the flagellar filament is composed of multiple flagellins of 29 kDa; 27 kDa and 25 kDa.

It is found in the secreted. It localises to the bacterial flagellum. In terms of biological role, flagellin is the subunit protein which polymerizes to form the filaments of bacterial flagella. The protein is Flagellin FljK (fljK) of Caulobacter vibrioides (strain ATCC 19089 / CIP 103742 / CB 15) (Caulobacter crescentus).